Consider the following 256-residue polypeptide: Ras-related protein Rab-26 (256 aa).

Positions 1–53 (MSRKKTPKSKAGSAPATSALPAANGPRPVRPGTARPGPEAPPNGPPQPGRSSV) are disordered. The span at 38–48 (PEAPPNGPPQP) shows a compositional bias: pro residues. Serine 72, glycine 73, valine 74, glycine 75, lysine 76, threonine 77, cysteine 78, serine 95, and threonine 96 together coordinate GTP. Residue threonine 77 participates in Mg(2+) binding. 2 short sequence motifs (switch) span residues 86-101 (GAFL…GIDF) and 119-136 (DTAG…YYRD). Residues threonine 96 and aspartate 119 each contribute to the Mg(2+) site. Glycine 122, asparagine 177, lysine 178, aspartate 180, alanine 208, and lysine 209 together coordinate GTP. 2 S-geranylgeranyl cysteine lipidation sites follow: cysteine 253 and cysteine 254.

Belongs to the small GTPase superfamily. Rab family. It depends on Mg(2+) as a cofactor.

Its subcellular location is the cell membrane. The enzyme catalyses GTP + H2O = GDP + phosphate + H(+). Its activity is regulated as follows. Regulated by guanine nucleotide exchange factors (GEFs) which promote the exchange of bound GDP for free GTP. Regulated by GTPase activating proteins (GAPs) which increase the GTP hydrolysis activity. Inhibited by GDP dissociation inhibitors (GDIs). Functionally, the small GTPases Rab are key regulators of intracellular membrane trafficking, from the formation of transport vesicles to their fusion with membranes. Rabs cycle between an inactive GDP-bound form and an active GTP-bound form that is able to recruit to membranes different set of downstream effectors directly responsible for vesicle formation, movement, tethering and fusion. RAB26 mediates transport of ADRA2A and ADRA2B from the Golgi to the cell membrane. Plays a role in the maturation of zymogenic granules and in pepsinogen secretion in the stomach. Plays a role in the secretion of amylase from acinar granules in the parotid gland. The chain is Ras-related protein Rab-26 (RAB26) from Bos taurus (Bovine).